A 632-amino-acid polypeptide reads, in one-letter code: Probable potassium transport system protein Kup (632 aa).

A run of 12 helical transmembrane segments spans residues 19–39 (LLCL…PLYV), 57–77 (VIGI…LKYV), 111–131 (ILFL…VITP), 147–167 (PLLQ…LFML), 175–195 (IGAL…LVGL), 213–233 (AFAF…AVVL), 257–277 (WYGG…ALLL), 286–306 (PFFL…ATAA), 347–367 (IYIP…VLGF), 376–396 (AYGV…FFVL), 404–424 (FLLG…FFSA), and 429–449 (VAQG…IMIT).

This sequence belongs to the HAK/KUP transporter (TC 2.A.72) family.

The protein localises to the cell inner membrane. The enzyme catalyses K(+)(in) + H(+)(in) = K(+)(out) + H(+)(out). Transport of potassium into the cell. Likely operates as a K(+):H(+) symporter. This Nitrosospira multiformis (strain ATCC 25196 / NCIMB 11849 / C 71) protein is Probable potassium transport system protein Kup.